A 443-amino-acid chain; its full sequence is Protein king tubby (443 aa).

Disordered stretches follow at residues 57–80 (TNGS…NNMR) and 98–191 (HELE…EGDV). Residues 68 to 80 (AMNTSRNHSNNMR) are compositionally biased toward polar residues. The span at 113–128 (QHQQSASHSANSTQSQ) shows a compositional bias: low complexity. Ser-136 is subject to Phosphoserine. The segment covering 177–186 (NGTGNGTGGE) has biased composition (gly residues).

Belongs to the TUB family.

The protein resides in the cytoplasm. It localises to the nucleus. The protein localises to the cell projection. Its subcellular location is the cilium membrane. It is found in the rhabdomere. This chain is Protein king tubby, found in Drosophila simulans (Fruit fly).